We begin with the raw amino-acid sequence, 304 residues long: L-lactate dehydrogenase (304 aa).

NAD(+) is bound by residues Val-11, Asp-32, Arg-37, and 76-77 (GA). Residues Gln-79, Arg-85, and 117-120 (NPVD) contribute to the substrate site. Ser-138 contacts NAD(+). 143-146 (DSAR) is a binding site for substrate. Beta-D-fructose 1,6-bisphosphate is bound by residues Arg-148 and His-163. His-170 acts as the Proton acceptor in catalysis. Thr-225 provides a ligand contact to substrate.

Belongs to the LDH/MDH superfamily. LDH family. Homotetramer.

It is found in the cytoplasm. It carries out the reaction (S)-lactate + NAD(+) = pyruvate + NADH + H(+). It participates in fermentation; pyruvate fermentation to lactate; (S)-lactate from pyruvate: step 1/1. Its activity is regulated as follows. Allosterically activated by fructose 1,6-bisphosphate (FBP). Catalyzes the conversion of lactate to pyruvate. In Deinococcus radiodurans (strain ATCC 13939 / DSM 20539 / JCM 16871 / CCUG 27074 / LMG 4051 / NBRC 15346 / NCIMB 9279 / VKM B-1422 / R1), this protein is L-lactate dehydrogenase.